The following is a 446-amino-acid chain: High mobility group B protein 13 (446 aa).

Disordered regions lie at residues 1 to 43 and 110 to 130; these read MSTV…TKSF and LAQT…AETK. Over residues 11–22 the composition is skewed to basic residues; sequence AKKSRNSRKALK. DNA-binding regions (HMG box) lie at residues 129–197 and 246–312; these read TKRP…TKEK and PKQP…EGYK. The segment covering 349–371 has biased composition (basic and acidic residues); that stretch reads NIIKKTKETAKNKKKNENVDPNK. The tract at residues 349–377 is disordered; sequence NIIKKTKETAKNKKKNENVDPNKPKKPTS. The segment at residues 372–440 is a DNA-binding region (HMG box 3); the sequence is PKKPTSSYFL…AYKKEVEEYN (69 aa).

Belongs to the HMGB family.

The protein localises to the nucleus. In Arabidopsis thaliana (Mouse-ear cress), this protein is High mobility group B protein 13 (HMGB13).